A 423-amino-acid polypeptide reads, in one-letter code: Cyclin-B2-1 (423 aa).

The tract at residues 1-61 (MDRASENRRL…EKSGKEEQKP (61 aa)) is disordered. A compositionally biased stretch (basic and acidic residues) spans 49–60 (PMLEKSGKEEQK).

The protein belongs to the cyclin family. Cyclin AB subfamily. Interacts with CDKB2-1. Expressed in the intercalary meristem and the elongation zone of internodes. Expressed in adventitious roots at all nodes under submergence conditions.

Its function is as follows. Involved in the control of the cell cycle at the G2/M (mitosis) transition. May activate CDKB2-1 kinase. This is Cyclin-B2-1 (CYCB2-1) from Oryza sativa subsp. indica (Rice).